We begin with the raw amino-acid sequence, 399 residues long: Acetate kinase (399 aa).

Asn8 contacts Mg(2+). An ATP-binding site is contributed by Lys15. A substrate-binding site is contributed by Arg89. The active-site Proton donor/acceptor is the Asp146. ATP-binding positions include 206 to 210, 283 to 285, and 331 to 335; these read HVGNG, DMR, and GMGEN. Glu383 contacts Mg(2+).

This sequence belongs to the acetokinase family. Homodimer. It depends on Mg(2+) as a cofactor. The cofactor is Mn(2+).

It localises to the cytoplasm. The catalysed reaction is acetate + ATP = acetyl phosphate + ADP. It participates in metabolic intermediate biosynthesis; acetyl-CoA biosynthesis; acetyl-CoA from acetate: step 1/2. In terms of biological role, catalyzes the formation of acetyl phosphate from acetate and ATP. Can also catalyze the reverse reaction. The sequence is that of Acetate kinase from Streptococcus equi subsp. equi (strain 4047).